Consider the following 297-residue polypeptide: HTH-type transcriptional regulator ArgP (297 aa).

The HTH lysR-type domain occupies 4–60 (PDYRTLQALDAVIRERGFERAAQKLCITQSAVSQRIKQLENLFGQPLLVRTVPPRPT). Positions 21-40 (FERAAQKLCITQSAVSQRIK) form a DNA-binding region, H-T-H motif.

It belongs to the LysR transcriptional regulatory family. In terms of assembly, homodimer.

Its function is as follows. Controls the transcription of genes involved in arginine and lysine metabolism. This chain is HTH-type transcriptional regulator ArgP, found in Serratia proteamaculans (strain 568).